The chain runs to 585 residues: Proline--tRNA ligase (585 aa).

Belongs to the class-II aminoacyl-tRNA synthetase family. ProS type 1 subfamily. Homodimer.

It is found in the cytoplasm. It carries out the reaction tRNA(Pro) + L-proline + ATP = L-prolyl-tRNA(Pro) + AMP + diphosphate. In terms of biological role, catalyzes the attachment of proline to tRNA(Pro) in a two-step reaction: proline is first activated by ATP to form Pro-AMP and then transferred to the acceptor end of tRNA(Pro). As ProRS can inadvertently accommodate and process non-cognate amino acids such as alanine and cysteine, to avoid such errors it has two additional distinct editing activities against alanine. One activity is designated as 'pretransfer' editing and involves the tRNA(Pro)-independent hydrolysis of activated Ala-AMP. The other activity is designated 'posttransfer' editing and involves deacylation of mischarged Ala-tRNA(Pro). The misacylated Cys-tRNA(Pro) is not edited by ProRS. The protein is Proline--tRNA ligase of Corynebacterium diphtheriae (strain ATCC 700971 / NCTC 13129 / Biotype gravis).